The chain runs to 726 residues: MSTSDDIHNTTATGKCPFHQGGHDQSAGAGTTTRDWWPNQLRVDLLNQHSNRSNPLGEDFDYRKEFSKLDYYGLKKDLKALLTESQPWWPADWGSYAGLFIRMAWHGAGTYRSIDGRGGAGRGQQRFAPLNSWPDNVSLDKARRLLWPIKQKYGQKISWADLFILAGNVALENSGFRTFGFGAGREDVWEPDLDVNWGDEKAWLTHRHPEALAKAPLGATEMGLIYVNPEGPDHSGEPLSAAAAIRATFGNMGMNDEETVALIAGGHTLGKTHGAGPTSNVGPDPEAAPIEEQGLGWASTYGSGVGADAITSGLEVVWTQTPTQWSNYFFENLFKYEWVQTRSPAGAIQFEAVDAPEIIPDPFDPSKKRKPTMLVTDLTLRFDPEFEKISRRFLNDPQAFNEAFARAWFKLTHRDMGPKSRYIGPEVPKEDLIWQDPLPQPIYNPTEQDIIDLKFAIADSGLSVSELVSVAWASASTFRGGDKRGGANGARLALMPQRDWDVNAAAVRALPVLEKIQKESGKASLADIIVLAGVVGVEKAASAAGLSIHVPFAPGRVDARQDQTDIEMFELLEPIADGFRNYRARLDVSTTESLLIDKAQQLTLTAPEMTALVGGMRVLGANFDGSKNGVFTDRVGVLSNDFFVNLLDMRYEWKATDESKELFEGRDRETGEVKFTASRADLVFGSNSVLRAVAEVYASSDAHEKFVKDFVAAWVKVMNLDRFDLL.

A disordered region spans residues methionine 1–threonine 33. The tryptophyl-tyrosyl-methioninium (Trp-Tyr) (with M-252) cross-link spans tryptophan 105–tyrosine 226. The active-site Proton acceptor is histidine 106. The segment at residues tyrosine 226–methionine 252 is a cross-link (tryptophyl-tyrosyl-methioninium (Tyr-Met) (with W-105)). Histidine 267 is a heme b binding site.

It belongs to the peroxidase family. Peroxidase/catalase subfamily. In terms of assembly, homodimer or homotetramer. Requires heme b as cofactor. Formation of the three residue Trp-Tyr-Met cross-link is important for the catalase, but not the peroxidase activity of the enzyme.

It catalyses the reaction H2O2 + AH2 = A + 2 H2O. It carries out the reaction 2 H2O2 = O2 + 2 H2O. In terms of biological role, bifunctional enzyme with both catalase and broad-spectrum peroxidase activity. The polypeptide is Catalase-peroxidase (Escherichia coli (strain K12 / DH10B)).